Reading from the N-terminus, the 317-residue chain is Protein phosphatase PTC7 homolog fig (317 aa).

In terms of domain architecture, PPM-type phosphatase spans 46 to 312; the sequence is PYLVTVVQGR…DDITLILASV (267 aa). Residues aspartate 90, glycine 91, and aspartate 235 each coordinate Mn(2+).

This sequence belongs to the PP2C family. Mg(2+) is required as a cofactor. Mn(2+) serves as cofactor.

The enzyme catalyses O-phospho-L-seryl-[protein] + H2O = L-seryl-[protein] + phosphate. It catalyses the reaction O-phospho-L-threonyl-[protein] + H2O = L-threonyl-[protein] + phosphate. In Drosophila erecta (Fruit fly), this protein is Protein phosphatase PTC7 homolog fig.